A 434-amino-acid polypeptide reads, in one-letter code: Histidinol dehydrogenase (434 aa).

Residues Ser-242, Gln-264, and His-267 each coordinate substrate. Residues Gln-264 and His-267 each contribute to the Zn(2+) site. Active-site proton acceptor residues include Glu-332 and His-333. Residues His-333, Asp-366, Glu-420, and His-425 each contribute to the substrate site. Asp-366 is a binding site for Zn(2+). Residue His-425 participates in Zn(2+) binding.

It belongs to the histidinol dehydrogenase family. Zn(2+) is required as a cofactor.

The enzyme catalyses L-histidinol + 2 NAD(+) + H2O = L-histidine + 2 NADH + 3 H(+). It participates in amino-acid biosynthesis; L-histidine biosynthesis; L-histidine from 5-phospho-alpha-D-ribose 1-diphosphate: step 9/9. Catalyzes the sequential NAD-dependent oxidations of L-histidinol to L-histidinaldehyde and then to L-histidine. This is Histidinol dehydrogenase from Desulfotalea psychrophila (strain LSv54 / DSM 12343).